Reading from the N-terminus, the 437-residue chain is Probable receptor-like serine/threonine-protein kinase At4g34500 (437 aa).

The helical transmembrane segment at 25 to 45 (LVIAICSVFILLISLLIFLFV) threads the bilayer. The Protein kinase domain maps to 145–426 (FSDDNMIGEG…MLEAEDFPFR (282 aa)). Residues 151–159 (IGEGGYGVV) and Lys-173 each bind ATP. Tyr-220 is subject to Phosphotyrosine. The Proton acceptor role is filled by Asp-273. Phosphoserine is present on Ser-277. 2 positions are modified to phosphothreonine: Thr-307 and Thr-312. Tyr-320 is modified (phosphotyrosine).

This sequence belongs to the protein kinase superfamily. Ser/Thr protein kinase family.

The protein localises to the cell membrane. The enzyme catalyses L-seryl-[protein] + ATP = O-phospho-L-seryl-[protein] + ADP + H(+). The catalysed reaction is L-threonyl-[protein] + ATP = O-phospho-L-threonyl-[protein] + ADP + H(+). In Arabidopsis thaliana (Mouse-ear cress), this protein is Probable receptor-like serine/threonine-protein kinase At4g34500.